Reading from the N-terminus, the 795-residue chain is Inactive N-acetylated-alpha-linked acidic dipeptidase-like protein 2 (795 aa).

Residues 1–38 form a disordered region; the sequence is MGENEASLPNTSLQGKKMAYQKVHADQRAPGHSQYLDN. The Cytoplasmic segment spans residues 1 to 121; it reads MGENEASLPN…RSAPKSNRCN (121 aa). Phosphoserine is present on serine 92. The helical; Signal-anchor for type II membrane protein transmembrane segment at 122–142 threads the bilayer; sequence FCHVLKILCTATILFIFGILI. At 143-795 the chain is on the extracellular side; it reads GYYVHTNCPS…VFKSVLDGKN (653 aa). N-linked (GlcNAc...) asparagine glycans are attached at residues asparagine 295, asparagine 373, asparagine 534, and asparagine 759.

The protein belongs to the peptidase M28 family. M28B subfamily. In terms of tissue distribution, expressed at higher level in kidney and placenta. In embryo, it is mainly confined to duodenal and stomach endoderm, mesonephros, metanephros and pancreas.

The protein resides in the membrane. May be catalytically inactive. The polypeptide is Inactive N-acetylated-alpha-linked acidic dipeptidase-like protein 2 (NAALADL2) (Homo sapiens (Human)).